Consider the following 803-residue polypeptide: Pre-mRNA-splicing ATP-dependent RNA helicase prp28 (803 aa).

2 disordered regions span residues 1-83 and 115-210; these read MDDI…PLSV and KRAK…PVDD. A compositionally biased stretch (pro residues) spans 11–62; that stretch reads EVPPPQPPPEPVERPPTPPPPPPEESVAPPPPPEVVAPPPPPEDLPPAPPPP. Residues 115 to 126 show a composition bias toward basic and acidic residues; that stretch reads KRAKEVEAERRL. The span at 135–146 shows a compositional bias: polar residues; it reads SATQSPSVSSEV. A Q motif motif is present at residues 367-395; sequence RSWDESGLPKRLMELVNKVGYKEPTPIQR. Residues 398–603 form the Helicase ATP-binding domain; that stretch reads IPIAMQSRDL…RKYLRRPAIV (206 aa). 411–418 serves as a coordination point for ATP; it reads AVTGSGKT. Residues 526 to 529 carry the DEAD box motif; the sequence is DEAD. In terms of domain architecture, Helicase C-terminal spans 614–777; the sequence is TVEQRVEFIA…RLPEELRKHE (164 aa). A disordered region spans residues 773–803; sequence LRKHEAAQSKPTRGFAKKNDDNSAFGSKGGW.

Belongs to the DEAD box helicase family. DDX23/PRP28 subfamily. In terms of assembly, component of the U5 snRNP complex.

The protein resides in the cytoplasm. It is found in the nucleus. It catalyses the reaction ATP + H2O = ADP + phosphate + H(+). Its function is as follows. ATP-dependent RNA helicase involved in mRNA splicing. May destabilize the U1/5'-splice site duplex to permit an effective competition for the 5'-splice site by the U6 snRNA, resulting in the switch between U1 and U6 at the 5'-splice site. May also act to unwind the U4/U6 base-pairing interaction in the U4/U6/U5 snRNP, facilitating the first covalent step of splicing. The sequence is that of Pre-mRNA-splicing ATP-dependent RNA helicase prp28 (prp28) from Aspergillus oryzae (strain ATCC 42149 / RIB 40) (Yellow koji mold).